The following is an 840-amino-acid chain: 9-beta-pimara-7,15-diene synthase, chloroplastic (840 aa).

A chloroplast-targeting transit peptide spans 1-56 (MASPMEAVARSSLVLAPRRRRALGLLPAAAAPFVLDCRRRHNGGMRRPHVSFACSA). Positions 589, 593, 733, 737, and 741 each coordinate Mg(2+). The DDXXD motif signature appears at 589–593 (DDFFD).

This sequence belongs to the terpene synthase family. Requires Mg(2+) as cofactor.

It is found in the plastid. It localises to the chloroplast. It carries out the reaction 9alpha-copalyl diphosphate = 9beta-pimara-7,15-diene + diphosphate. Functionally, involved in the biosynthesis of momilactone A and B phytoalexins. Catalyzes the conversion of syn-copalyl diphosphate to the phytoalexin precursor syn-pimara-7,15-diene. This chain is 9-beta-pimara-7,15-diene synthase, chloroplastic, found in Oryza sativa subsp. indica (Rice).